A 1051-amino-acid chain; its full sequence is Outer capsid protein VP2 (1051 aa).

It belongs to the orbivirus VP2 family.

The protein resides in the virion. Functionally, the VP2 protein is one of the two proteins (with VP5) which constitute the virus particle outer capsid. It is the major target of the host immunogenic response. The polypeptide is Outer capsid protein VP2 (Segment-2) (African horse sickness virus (AHSV)).